Here is a 1326-residue protein sequence, read N- to C-terminus: Coiled-coil domain-containing protein 171 (1326 aa).

8 coiled-coil regions span residues 53-294 (TTKH…RAAH), 323-391 (AEAV…RLQY), 450-561 (SFSV…AFHK), 597-630 (SELC…ICKN), 660-707 (WHRQ…EQLV), 765-792 (FKLE…MKKK), 979-1143 (FTQR…KECV), and 1217-1241 (IMTL…LHTA). The disordered stretch occupies residues 1306 to 1326 (SSHSSPVTMSANANRPTQIGL).

The sequence is that of Coiled-coil domain-containing protein 171 (CCDC171) from Homo sapiens (Human).